Reading from the N-terminus, the 377-residue chain is Alkane 1-monooxygenase 2 (377 aa).

A run of 4 helical transmembrane segments spans residues 17-37, 43-63, 87-107, and 116-136; these read GYWIWLIAVLGIPLSYWWSLG, AWPWLVISVVFGLIPILDAIV, VLSLATVPLLLGMLVWSGWIL, and VGQLGWILSVGTVMGAIGITV. The Fe cation site is built by His-138, His-142, His-168, His-172, and His-173. Residues 236 to 256 traverse the membrane as a helical segment; sequence ALFLLGFSLAFGWLGAIFFLG. 3 residues coordinate Fe cation: His-312, His-315, and His-316.

It belongs to the fatty acid desaturase type 1 family. AlkB subfamily. Fe(3+) is required as a cofactor.

It is found in the cell inner membrane. The enzyme catalyses octane + 2 reduced [rubredoxin] + O2 + 2 H(+) = 2 oxidized [rubredoxin] + octan-1-ol + H2O. Its pathway is hydrocarbon metabolism; alkane degradation. Functionally, catalyzes the hydroxylation of n-alkanes in the presence of a NADH-rubredoxin reductase and rubredoxin. It preferably hydroxylases C12-C20 hydrocarbons. The protein is Alkane 1-monooxygenase 2 (alkB2) of Pseudomonas aeruginosa (strain ATCC 15692 / DSM 22644 / CIP 104116 / JCM 14847 / LMG 12228 / 1C / PRS 101 / PAO1).